Consider the following 659-residue polypeptide: MAAAVLMDRVQSCVTFEDVFVYFSREEWELLEEAQRFLYRDVMLENFALVATLGFWCEAEHEAPSEQSVSVEGVSQVRTAESGLFQKAHPCEMCDPLLKDILHLAEHQGSHLTQKLCTRGLCRRRFSFSANFYQHQKQHNGENCFRGDDGGASFVKSCTVHMLGRSFTCREEGMDLPDSSGLFQHQTTYNRVSPCRRTECMESFPHSSSLRQHQGDYDGQMLFSCGDEGKAFLDTFTLLDSQMTHAEVRPFRCLPCGNVFKEKSALINHRKIHSGEISHVCKECGKAFIHLHHLKMHQKFHTGKRHYTCSECGKAFSRKDTLVQHQRVHTGERSYDCSECGKAYSRSSHLVQHQRIHTGERPYKCNKCGKAFSRKDTLVQHQRFHTGERPYECSECGKFFSQSSHLIEHWRIHTGARPYECIECGKFFSHNSSLIKHRRVHTGARSYVCSKCGKAFGCKDTLVQHQIIHTGARPYECSECGKAFSRKDTLVQHQKIHTGERPYECGECGKFFSHSSNLIVHQRIHTGAKPYECNECGKCFSHNSSLILHQRVHTGARPYVCSECGKAYISSSHLVQHKKVHTGARPYECSECGKFFSRNSGLILHQRVHTGEKPYVCSECGKAYSRSSHLVRHQKAHTGERAHECNSFGGPLAASLKLV.

Residues 14–88 (VTFEDVFVYF…TAESGLFQKA (75 aa)) form the KRAB domain. 16 C2H2-type zinc fingers span residues 89–111 (HPCEMCDPLLKDILHLAEHQGSH), 115–139 (KLCTRGLCRRRFSFSANFYQHQKQH), 251–273 (FRCLPCGNVFKEKSALINHRKIH), 279–301 (HVCKECGKAFIHLHHLKMHQKFH), 307–329 (YTCSECGKAFSRKDTLVQHQRVH), 335–357 (YDCSECGKAYSRSSHLVQHQRIH), 363–385 (YKCNKCGKAFSRKDTLVQHQRFH), 391–413 (YECSECGKFFSQSSHLIEHWRIH), 419–441 (YECIECGKFFSHNSSLIKHRRVH), 447–469 (YVCSKCGKAFGCKDTLVQHQIIH), 475–497 (YECSECGKAFSRKDTLVQHQKIH), 503–525 (YECGECGKFFSHSSNLIVHQRIH), 531–553 (YECNECGKCFSHNSSLILHQRVH), 559–581 (YVCSECGKAYISSSHLVQHKKVH), 587–609 (YECSECGKFFSRNSGLILHQRVH), and 615–637 (YVCSECGKAYSRSSHLVRHQKAH).

This sequence belongs to the krueppel C2H2-type zinc-finger protein family. Probably part of a corepressor complex containing ZNF304, TRIM28, SETDB1 and DNMT1; leading to promoter hypermethylation and transcriptional silencing. Probably associates with Polycomb group (PcG) complexes; leading to trimethylation of 'Lys-27' of histone H3 (H3K27me3). Interacts with USP28. Post-translationally, deubiquitinated by USP28; the deubiquitination leads to the stabilization of ZNF304 from proteolytic degradation. Expressed in undifferentiated embryonic stem cells (ESCs). Expressed strongly in colorectal cancers cells (CRCs). Expressed strongly in ovarian carcinoma (OC) tumor cell lines compared to non-transformed ovarian epithelial cells (at protein level). Expressed in lymphoid tissues, thyroid, adrenal gland, prostate, pancreas and skeletal muscles.

Its subcellular location is the nucleus. In terms of biological role, acts as a transcriptional regulator and plays a role in gene silencing. Probably forms a corepressor complex required for activated KRAS-mediated promoter hypermethylation and transcriptional silencing of several tumor suppressor genes (TSGs) or other tumor-related genes in colorectal cancer (CRC) cells. Also required to maintain a transcriptionally repressive state of genes in undifferentiated embryonic stem cells (ESCs) by inducing trimethylation of 'Lys-27' of histone H3 (H3K27me3) in a Polycomb group (PcG) complexes-dependent manner. Associates at promoter regions of TSGs and mediates the recruitment of the corepressor complex containing the scaffolding protein TRIM28, methyltransferase DNMT1 and histone methyltransferase SETDB1 and/or the PcG complexes at those sites. Transcription factor involved in the metastatic cascade process by inducing cell migration and proliferation and gain resistance to anoikis of ovarian carcinoma (OC) cells via integrin-mediated signaling pathways. Associates with the ITGB1 promoter and positively regulates beta-1 integrin transcription expression. Promotes angiogenesis. Promotes tumor growth. The chain is Zinc finger protein 304 from Homo sapiens (Human).